A 416-amino-acid chain; its full sequence is Tryptophan synthase beta chain (416 aa).

Lys98 is modified (N6-(pyridoxal phosphate)lysine).

Belongs to the TrpB family. As to quaternary structure, tetramer of two alpha and two beta chains. It depends on pyridoxal 5'-phosphate as a cofactor.

The catalysed reaction is (1S,2R)-1-C-(indol-3-yl)glycerol 3-phosphate + L-serine = D-glyceraldehyde 3-phosphate + L-tryptophan + H2O. It participates in amino-acid biosynthesis; L-tryptophan biosynthesis; L-tryptophan from chorismate: step 5/5. In terms of biological role, the beta subunit is responsible for the synthesis of L-tryptophan from indole and L-serine. The protein is Tryptophan synthase beta chain of Ruegeria pomeroyi (strain ATCC 700808 / DSM 15171 / DSS-3) (Silicibacter pomeroyi).